Consider the following 218-residue polypeptide: Ras-related protein RABA1i (218 aa).

Gly-20–Ser-27 provides a ligand contact to GTP. Residues Ser-42–Phe-50 carry the Effector region motif. GTP contacts are provided by residues Asp-68 to Gln-72, Asn-126 to Asp-129, and Ser-156 to Ala-157. Residues Cys-215 and Cys-216 are each lipidated (S-geranylgeranyl cysteine).

The protein belongs to the small GTPase superfamily. Rab family.

The protein localises to the cell membrane. Its function is as follows. Intracellular vesicle trafficking and protein transport. In Arabidopsis thaliana (Mouse-ear cress), this protein is Ras-related protein RABA1i (RABA1I).